Reading from the N-terminus, the 179-residue chain is Large ribosomal subunit protein uL5 (179 aa).

The protein belongs to the universal ribosomal protein uL5 family. Part of the 50S ribosomal subunit; part of the 5S rRNA/L5/L18/L25 subcomplex. Contacts the 5S rRNA and the P site tRNA. Forms a bridge to the 30S subunit in the 70S ribosome.

In terms of biological role, this is one of the proteins that bind and probably mediate the attachment of the 5S RNA into the large ribosomal subunit, where it forms part of the central protuberance. In the 70S ribosome it contacts protein S13 of the 30S subunit (bridge B1b), connecting the 2 subunits; this bridge is implicated in subunit movement. Contacts the P site tRNA; the 5S rRNA and some of its associated proteins might help stabilize positioning of ribosome-bound tRNAs. This is Large ribosomal subunit protein uL5 from Maridesulfovibrio salexigens (strain ATCC 14822 / DSM 2638 / NCIMB 8403 / VKM B-1763) (Desulfovibrio salexigens).